The primary structure comprises 216 residues: Pyrophosphatase PpaX (216 aa).

Aspartate 9 acts as the Nucleophile in catalysis.

This sequence belongs to the HAD-like hydrolase superfamily. PpaX family. It depends on Mg(2+) as a cofactor.

It catalyses the reaction diphosphate + H2O = 2 phosphate + H(+). In terms of biological role, hydrolyzes pyrophosphate formed during P-Ser-HPr dephosphorylation by HPrK/P. Might play a role in controlling the intracellular pyrophosphate pool. The chain is Pyrophosphatase PpaX from Bacillus anthracis (strain CDC 684 / NRRL 3495).